Consider the following 65-residue polypeptide: Large ribosomal subunit protein uL30 (65 aa).

Belongs to the universal ribosomal protein uL30 family. As to quaternary structure, part of the 50S ribosomal subunit.

This Mesorhizobium japonicum (strain LMG 29417 / CECT 9101 / MAFF 303099) (Mesorhizobium loti (strain MAFF 303099)) protein is Large ribosomal subunit protein uL30.